Here is a 235-residue protein sequence, read N- to C-terminus: Phosphoribosylaminoimidazole-succinocarboxamide synthase (235 aa).

Belongs to the SAICAR synthetase family.

The enzyme catalyses 5-amino-1-(5-phospho-D-ribosyl)imidazole-4-carboxylate + L-aspartate + ATP = (2S)-2-[5-amino-1-(5-phospho-beta-D-ribosyl)imidazole-4-carboxamido]succinate + ADP + phosphate + 2 H(+). The protein operates within purine metabolism; IMP biosynthesis via de novo pathway; 5-amino-1-(5-phospho-D-ribosyl)imidazole-4-carboxamide from 5-amino-1-(5-phospho-D-ribosyl)imidazole-4-carboxylate: step 1/2. The sequence is that of Phosphoribosylaminoimidazole-succinocarboxamide synthase from Sulfolobus acidocaldarius (strain ATCC 33909 / DSM 639 / JCM 8929 / NBRC 15157 / NCIMB 11770).